Consider the following 144-residue polypeptide: MDIIEILEHLPHRYPFLLVDRVLEIEPGKSIHAYKNVTINEPFFVGHFPHHPVMPGVLIMEALAQAAGILSFKSMDEKPSPDTVFYFAGIDEARFKKPVMPGDQLHLHIEIERQMRGVWKYKAEARVDGQLAASAKLMCAKRDL.

H47 is an active-site residue.

This sequence belongs to the thioester dehydratase family. FabZ subfamily.

It localises to the cytoplasm. The catalysed reaction is a (3R)-hydroxyacyl-[ACP] = a (2E)-enoyl-[ACP] + H2O. Involved in unsaturated fatty acids biosynthesis. Catalyzes the dehydration of short chain beta-hydroxyacyl-ACPs and long chain saturated and unsaturated beta-hydroxyacyl-ACPs. The sequence is that of 3-hydroxyacyl-[acyl-carrier-protein] dehydratase FabZ from Dechloromonas aromatica (strain RCB).